The sequence spans 395 residues: Fe(3+) ions import ATP-binding protein FbpC 2 (395 aa).

The interval 1–21 (MHIAQELADETCNSPRGAGHA) is disordered. The region spanning 23-264 (LRYPSDRRTA…PKTLFVADFI (242 aa)) is the ABC transporter domain. Position 66 to 73 (66 to 73 (GPSGCGKT)) interacts with ATP.

It belongs to the ABC transporter superfamily. Fe(3+) ion importer (TC 3.A.1.10) family. The complex is composed of two ATP-binding proteins (FbpC), two transmembrane proteins (FbpB) and a solute-binding protein (FbpA).

The protein resides in the cell inner membrane. The catalysed reaction is Fe(3+)(out) + ATP + H2O = Fe(3+)(in) + ADP + phosphate + H(+). Part of the ABC transporter complex FbpABC involved in Fe(3+) ions import. Responsible for energy coupling to the transport system. This Rhizobium meliloti (strain 1021) (Ensifer meliloti) protein is Fe(3+) ions import ATP-binding protein FbpC 2.